The primary structure comprises 433 residues: Succinate--CoA ligase [GDP-forming] subunit beta, mitochondrial (433 aa).

The N-terminal 38 residues, 1-38 (IPAAPVAAQARKLLRDLAFRPPLLAARSQVVQLTPRRW), are a transit peptide targeting the mitochondrion. Residues 47–275 (KKLMSDNGVK…NAEFRQKDIF (229 aa)) enclose the ATP-grasp domain. Residue glutamine 58 participates in GTP binding. N6-acetyllysine is present on lysine 74. Lysine 79 is modified (N6-succinyllysine). 91 to 93 (GRG) contributes to the GTP binding site. N6-acetyllysine is present on residues lysine 133 and lysine 140. Residue leucine 147 participates in GTP binding. Serine 162 carries the post-translational modification Phosphoserine. N6-acetyllysine occurs at positions 201 and 228. Mg(2+) is bound by residues asparagine 244 and aspartate 258. N6-acetyllysine is present on residues lysine 272 and lysine 292. Asparagine 309 contributes to the substrate binding site. The residue at position 339 (lysine 339) is an N6-succinyllysine. Residue lysine 348 is modified to N6-acetyllysine. Substrate is bound at residue 366–368 (GIV). An N6-acetyllysine mark is found at lysine 387 and lysine 424.

The protein belongs to the succinate/malate CoA ligase beta subunit family. GTP-specific subunit beta subfamily. Heterodimer of an alpha and a beta subunit. The beta subunit determines specificity for GTP. The cofactor is Mg(2+).

It localises to the mitochondrion. It carries out the reaction GTP + succinate + CoA = succinyl-CoA + GDP + phosphate. The protein operates within carbohydrate metabolism; tricarboxylic acid cycle; succinate from succinyl-CoA (ligase route): step 1/1. In terms of biological role, GTP-specific succinyl-CoA synthetase functions in the citric acid cycle (TCA), coupling the hydrolysis of succinyl-CoA to the synthesis of GTP and thus represents the only step of substrate-level phosphorylation in the TCA. The beta subunit provides nucleotide specificity of the enzyme and binds the substrate succinate, while the binding sites for coenzyme A and phosphate are found in the alpha subunit. The chain is Succinate--CoA ligase [GDP-forming] subunit beta, mitochondrial from Sus scrofa (Pig).